A 418-amino-acid polypeptide reads, in one-letter code: Putative F-box protein At1g20795 (418 aa).

The region spanning 1–46 is the F-box domain; sequence METLGLPLPLFEKILFRLDPISLVMMKCTRRSFNSHISEDPYFKSK.

This chain is Putative F-box protein At1g20795, found in Arabidopsis thaliana (Mouse-ear cress).